Consider the following 138-residue polypeptide: Protein FAM136A (138 aa).

This sequence belongs to the FAM136 family.

The chain is Protein FAM136A (fam136a) from Xenopus laevis (African clawed frog).